We begin with the raw amino-acid sequence, 483 residues long: Alginate biosynthesis protein AlgA (483 aa).

It belongs to the mannose-6-phosphate isomerase type 2 family. As to quaternary structure, monomer. Co(2+) serves as cofactor.

It catalyses the reaction D-mannose 6-phosphate = D-fructose 6-phosphate. It carries out the reaction alpha-D-mannose 1-phosphate + GTP + H(+) = GDP-alpha-D-mannose + diphosphate. It participates in nucleotide-sugar biosynthesis; GDP-alpha-D-mannose biosynthesis; GDP-alpha-D-mannose from alpha-D-mannose 1-phosphate (GTP route): step 1/1. The protein operates within nucleotide-sugar biosynthesis; GDP-alpha-D-mannose biosynthesis; alpha-D-mannose 1-phosphate from D-fructose 6-phosphate: step 1/2. Functionally, produces a precursor for alginate polymerization. The alginate layer provides a protective barrier against host immune defenses and antibiotics. The protein is Alginate biosynthesis protein AlgA (algA) of Pseudomonas syringae pv. tomato (strain ATCC BAA-871 / DC3000).